Here is a 514-residue protein sequence, read N- to C-terminus: Na(+)/H(+) antiporter NhaB (514 aa).

The next 12 membrane-spanning stretches (helical) occupy residues 23 to 43 (LALLVFLIVNPFIFLANPFIA), 63 to 83 (PLLPGGLLAIEAVIIGMTSAA), 97 to 117 (LLLMFMVAGIYFMKQLLLFIF), 120 to 140 (LLLSIRSKMVLSLAFCVAAAF), 144 to 164 (FLDALTVVAVVISVAVGFYGI), 202 to 222 (LMMHAGVGTALGGVMTMVGEP), 238 to 258 (FFLRMSPVTVPVLVCGLLTCM), 303 to 323 (AIIGVWLVTALALHLAEVGLI), 357 to 377 (LTVFFSIVAVIIDQHLFAPII), 391 to 411 (LFYLFNGLLSSISDNVFVGTI), 447 to 467 (ATPNGQAAFLFLLTSALAPLI), and 475 to 495 (VWMALPYTIVLTLIGLLCVEF).

This sequence belongs to the NhaB Na(+)/H(+) (TC 2.A.34) antiporter family.

Its subcellular location is the cell inner membrane. It catalyses the reaction 2 Na(+)(in) + 3 H(+)(out) = 2 Na(+)(out) + 3 H(+)(in). Na(+)/H(+) antiporter that extrudes sodium in exchange for external protons. This chain is Na(+)/H(+) antiporter NhaB, found in Salmonella heidelberg (strain SL476).